A 154-amino-acid polypeptide reads, in one-letter code: Catabolic 3-dehydroquinase (154 aa).

The active-site Proton acceptor is the Tyr25. Residues Asn79, His85, and Asp92 each contribute to the substrate site. The Proton donor role is filled by His105. Residues 106 to 107 (IS) and Arg116 contribute to the substrate site.

The protein belongs to the type-II 3-dehydroquinase family. Homododecamer. Adopts a ring-like structure, composed of an arrangement of two hexameric rings stacked on top of one another.

The enzyme catalyses 3-dehydroquinate = 3-dehydroshikimate + H2O. It participates in aromatic compound metabolism; 3,4-dihydroxybenzoate biosynthesis; 3,4-dihydroxybenzoate from 3-dehydroquinate: step 1/2. Functionally, is involved in the catabolism of quinate. Allows the utilization of quinate as carbon source via the beta-ketoadipate pathway. The polypeptide is Catabolic 3-dehydroquinase (Sclerotinia sclerotiorum (strain ATCC 18683 / 1980 / Ss-1) (White mold)).